The primary structure comprises 214 residues: MGRGPRYRVPLRRRREGKTNYYRRFRLVKSGKPRMAVRISNEYLWVQFLEARIEGDRVIAAAHSRELIKKFGWKGDGNNTCAAYLTGYLAGLRALEKGVREAVLDVGLHKPVKGSRVFAALKGALDAGVEIPHSEEILPGDERVRCEHIAQWAEALKEENAELYQRQFSRYLDRGLNPEELPGHVEEVKKAIEEAYKHVAEETAAEGEEVEVKA.

It belongs to the universal ribosomal protein uL18 family. As to quaternary structure, part of the 50S ribosomal subunit. Contacts the 5S and 23S rRNAs.

In terms of biological role, this is one of the proteins that bind and probably mediate the attachment of the 5S RNA into the large ribosomal subunit, where it forms part of the central protuberance. This Aeropyrum pernix (strain ATCC 700893 / DSM 11879 / JCM 9820 / NBRC 100138 / K1) protein is Large ribosomal subunit protein uL18.